Reading from the N-terminus, the 360-residue chain is Photosystem II protein D1 1 (360 aa).

Over 2-31 (TTTLQRRESANLWERFCNWVTSTDNRLYVG) the chain is Cytoplasmic. The helical transmembrane segment at 32–53 (WFGVIMIPTLLAATICFVIAFI) threads the bilayer. At 54-110 (AAPPVDIDGIREPVSGSLLYGNNIITGAVVPSSNAIGLHFYPIWEAASLDEWLYNGG) the chain is on the lumenal side. Residues 111–132 (PYQLIIFHFLLGASCYMGRQWE) traverse the membrane as a helical segment. H118 lines the chlorophyll a pocket. Pheophytin a-binding residues include Y126 and Q130. Over 133–142 (LSYRLGMRPW) the chain is Cytoplasmic. A helical transmembrane segment spans residues 143–163 (ICVAYSAPLASAFAVFLIYPI). Pheophytin a is bound at residue Y147. Residues 164–191 (GQGSFSDGMPLGISGTFNFMIVFQAEHN) lie on the Lumenal side of the membrane. Residues D170 and E189 each contribute to the [CaMn4O5] cluster site. The chain crosses the membrane as a helical span at residues 192-217 (ILMHPFHQLGVAGVFGGALFCAMHGS). H198 is a binding site for chlorophyll a. A quinone contacts are provided by residues H215 and 264 to 265 (SF). H215 is a binding site for Fe cation. The Cytoplasmic segment spans residues 218–272 (LVTSSLIRETTETESANYGYKFGQEEETYNIVAAHGYFGRLIFQYASFNNSRSLH). Residue H272 coordinates Fe cation. Residues 273-295 (FFLAAWPVVGVWFTALGISTMAF) form a helical membrane-spanning segment. The Lumenal portion of the chain corresponds to 296 to 344 (NLNGFNFNHSVIDAKGNVINTWADIINRANLGMEVMHERNAHNFPLDLA). [CaMn4O5] cluster is bound by residues H332, E333, D342, and A344. The propeptide occupies 345 to 360 (SAESAPVAMIAPSING).

This sequence belongs to the reaction center PufL/M/PsbA/D family. PSII is composed of 1 copy each of membrane proteins PsbA, PsbB, PsbC, PsbD, PsbE, PsbF, PsbH, PsbI, PsbJ, PsbK, PsbL, PsbM, PsbT, PsbX, PsbY, PsbZ, Psb30/Ycf12, peripheral proteins PsbO, CyanoQ (PsbQ), PsbU, PsbV and a large number of cofactors. It forms dimeric complexes. Precursor protein interacts with Ycf48. Part of a photosystem II (PSII) assembly intermediate complex PSII-I; crystallized from a strain deleted of psbJ, it forms monomeric PSII before addition of the oxygen evolving complex. PSII-I includes 3 assembly factors not found in mature PSII (Psb27, Psb28 and Psb34). In PSII-I the C-terminus of D1 (this subunit) is already processed but not yet found at its final position. The D1/D2 heterodimer binds P680, chlorophylls that are the primary electron donor of PSII, and subsequent electron acceptors. It shares a non-heme iron and each subunit binds pheophytin, quinone, additional chlorophylls, carotenoids and lipids. D1 provides most of the ligands for the Mn4-Ca-O5 cluster of the oxygen-evolving complex (OEC). There is also a Cl(-1) ion associated with D1 and D2, which is required for oxygen evolution. PSII binds additional chlorophylls, carotenoids and specific lipids. serves as cofactor. Post-translationally, C-terminally processed by CtpA; processing is essential to allow assembly of the oxygen-evolving complex and thus photosynthetic growth. In terms of processing, tyr-161 forms a radical intermediate that is referred to as redox-active TyrZ, YZ or Y-Z.

Its subcellular location is the cellular thylakoid membrane. The catalysed reaction is 2 a plastoquinone + 4 hnu + 2 H2O = 2 a plastoquinol + O2. Photosystem II (PSII) is a light-driven water:plastoquinone oxidoreductase that uses light energy to abstract electrons from H(2)O, generating O(2) and a proton gradient subsequently used for ATP formation. It consists of a core antenna complex that captures photons, and an electron transfer chain that converts photonic excitation into a charge separation. The D1/D2 (PsbA/PsbD) reaction center heterodimer binds P680, the primary electron donor of PSII as well as several subsequent electron acceptors. The chain is Photosystem II protein D1 1 from Thermosynechococcus vestitus (strain NIES-2133 / IAM M-273 / BP-1).